The primary structure comprises 289 residues: Polyisoprenoid diphosphate/phosphate phosphohydrolase PLPP6 (289 aa).

Residues 1–81 (MQSPRRNAEG…SSQALPPQLP (81 aa)) form a disordered region. The Cytoplasmic segment spans residues 1–126 (MQSPRRNAEG…ESSSWGSMRP (126 aa)). Phosphoserine occurs at positions 23, 30, and 64. The chain crosses the membrane as a helical span at residues 127–147 (LMKLLEISGHGIPWLLGTLYC). Residues 148 to 158 (LSRSDSWAGRE) lie on the Lumenal side of the membrane. The chain crosses the membrane as a helical span at residues 159 to 179 (VLMNLLFALLLDLLLVSLIKG). Residues 178 to 186 (KGLVRRRRP) form a phosphatase sequence motif I region. The Cytoplasmic segment spans residues 180–222 (LVRRRRPAHNQMDMFFTISVDKYSFPSGHTTRAALVSRFILNH). Residues 205–208 (PSGH) are phosphatase sequence motif II. Residue histidine 208 is the Proton donors of the active site. A helical membrane pass occupies residues 223–243 (LVLAIPLRVLVVLWAFILGLS). The segment at 243–254 (SRVMLGRHNVTD) is phosphatase sequence motif III. The Lumenal portion of the chain corresponds to 244 to 254 (RVMLGRHNVTD). Catalysis depends on histidine 250, which acts as the Nucleophile. Residues 255 to 275 (VAFGFFLGYMQYSIVDYCWLS) traverse the membrane as a helical segment. Over 276 to 289 (PRTAPVLFVLWNQP) the chain is Cytoplasmic.

It belongs to the PA-phosphatase related phosphoesterase family. Phosphorylation by PKC activates the phosphatase activity towards presqualene diphosphate.

It is found in the endoplasmic reticulum membrane. The protein resides in the nucleus envelope. The protein localises to the nucleus inner membrane. The catalysed reaction is presqualene diphosphate + H2O = presqualene phosphate + phosphate + H(+). It carries out the reaction presqualene phosphate + H2O = presqualene alcohol + phosphate. It catalyses the reaction (2E,6E)-farnesyl diphosphate + H2O = (2E,6E)-farnesyl phosphate + phosphate + H(+). The enzyme catalyses (2E,6E)-farnesyl phosphate + H2O = (2E,6E)-farnesol + phosphate. The catalysed reaction is (2E,6E,10E)-geranylgeranyl diphosphate + H2O = (2E,6E,10E)-geranylgeranyl phosphate + phosphate + H(+). It carries out the reaction (2E,6E,10E)-geranylgeranyl phosphate + H2O = (2E,6E,10E)-geranylgeraniol + phosphate. It catalyses the reaction (2E)-geranyl diphosphate + H2O = (2E)-geranyl phosphate + phosphate + H(+). The enzyme catalyses (2E)-geranyl phosphate + H2O = (2E)-geraniol + phosphate. The catalysed reaction is 1,2-dihexadecanoyl-sn-glycero-3-phosphate + H2O = 1,2-dihexadecanoyl-sn-glycerol + phosphate. Functionally, magnesium-independent polyisoprenoid diphosphatase that catalyzes the sequential dephosphorylation of presqualene, farnesyl, geranyl and geranylgeranyl diphosphates. Functions in the innate immune response through the dephosphorylation of presqualene diphosphate which acts as a potent inhibitor of the signaling pathways contributing to polymorphonuclear neutrophils activation. May regulate the biosynthesis of cholesterol and related sterols by dephosphorylating presqualene and farnesyl diphosphate, two key intermediates in this biosynthetic pathway. May also play a role in protein prenylation by acting on farnesyl diphosphate and its derivative geranylgeranyl diphosphate, two precursors for the addition of isoprenoid anchors to membrane proteins. Has a lower activity towards phosphatidic acid (PA), but through phosphatidic acid dephosphorylation may participate in the biosynthesis of phospholipids and triacylglycerols. May also act on ceramide-1-P, lysophosphatidic acid (LPA) and sphing-4-enine 1-phosphate/sphingosine-1-phosphate. The polypeptide is Polyisoprenoid diphosphate/phosphate phosphohydrolase PLPP6 (Bos taurus (Bovine)).